Here is a 648-residue protein sequence, read N- to C-terminus: Macrolide export ATP-binding/permease protein MacB (648 aa).

One can recognise an ABC transporter domain in the interval 5–243 (LELKDIRRSY…AGGTEPVVNT (239 aa)). Residue 41–48 (GASGSGKS) participates in ATP binding. Helical transmembrane passes span 273–293 (LLTM…VVVG), 523–543 (LFLT…VMNI), 576–596 (AVLV…LIAF), and 600–620 (LFLP…AFLC).

Belongs to the ABC transporter superfamily. Macrolide exporter (TC 3.A.1.122) family. As to quaternary structure, homodimer. Part of the tripartite efflux system MacAB-TolC, which is composed of an inner membrane transporter, MacB, a periplasmic membrane fusion protein, MacA, and an outer membrane component, TolC. The complex forms a large protein conduit and can translocate molecules across both the inner and outer membranes. Interacts with MacA.

The protein localises to the cell inner membrane. Part of the tripartite efflux system MacAB-TolC. MacB is a non-canonical ABC transporter that contains transmembrane domains (TMD), which form a pore in the inner membrane, and an ATP-binding domain (NBD), which is responsible for energy generation. Confers resistance against macrolides. The protein is Macrolide export ATP-binding/permease protein MacB of Shigella sonnei (strain Ss046).